The chain runs to 364 residues: Anthranilate phosphoribosyltransferase (364 aa).

Residues Gly-101, 104 to 105 (GD), Thr-109, 111 to 114 (NLST), 129 to 137 (KHGNRAASS), and Gly-141 contribute to the 5-phospho-alpha-D-ribose 1-diphosphate site. Gly-101 contacts anthranilate. A Mg(2+)-binding site is contributed by Ser-113. Asn-132 contacts anthranilate. Arg-187 is an anthranilate binding site. Asp-245 and Glu-246 together coordinate Mg(2+).

Belongs to the anthranilate phosphoribosyltransferase family. Homodimer. It depends on Mg(2+) as a cofactor.

The catalysed reaction is N-(5-phospho-beta-D-ribosyl)anthranilate + diphosphate = 5-phospho-alpha-D-ribose 1-diphosphate + anthranilate. It participates in amino-acid biosynthesis; L-tryptophan biosynthesis; L-tryptophan from chorismate: step 2/5. Functionally, catalyzes the transfer of the phosphoribosyl group of 5-phosphorylribose-1-pyrophosphate (PRPP) to anthranilate to yield N-(5'-phosphoribosyl)-anthranilate (PRA). The polypeptide is Anthranilate phosphoribosyltransferase (Mycolicibacterium vanbaalenii (strain DSM 7251 / JCM 13017 / BCRC 16820 / KCTC 9966 / NRRL B-24157 / PYR-1) (Mycobacterium vanbaalenii)).